The primary structure comprises 770 residues: MGFLLSAEQVLQFVTNQWQDPYAVLGPQQIEQGETSFWLVRALVPNAKQVWLVERATGQAYPMQPLHPETLFELCFAPGTPVPDYFLRAQRVWDPEGQHLEEWEDPYRFPLEKVNHIGELDRYLFNEGNHHRIYEKLGAHPISVDGVQGVHFAVWAPNARNVSVIGDFNHWDGRQHQMKRLGESGIWAVFIPGVGPGAVYKYEVKTAWGDIYEKSDPYGFQQEVRPKTGSIVADLHTYTWHDQEWLEKRAATDPLRSPISVYEVHLGSWMHASTEDPPADGHLVPVEQKPNTRFLTYRELADKLIPYVKELGFTHIELLPVAEHPFDGSWGYQVIGYYAVTSRYGSPQDFMYFVDRAHQEGIGVIVDWVPGHFPKDGHGLAFFDGTHLYEYADPRKGEHKGWGTLVFNYGRNEVRNYLIANALFWFDKYHIDGLRVDAVASMLYLDYDRKEWIPNCYGGREHLEAIDFFRQLNTLIFKYYPGVLSIAEESTAWPMVTWPTHVGGLGFNLKWNMGWMHDMLNYFRMDPWFRQFHHNLVTFSLMYAFSENYMLAFSHDEVVHGKSHMLGKMPGDLWHKFASLRALYGYMFTHPGKKTLFMSMEFGQWNEWNVWADLDWELLQYEPHAKLRHYVATLNQLLRSQPALYTQDTKPEGFRWIDCSDHRGIISFIRYGEDPREWLVVVCNFTPVVWPNYRIGVPQRGFYRELLNSDAVEFWGSGVGNLGGKWTDDWPYHNLPYSLELCLPPLSTLVLKWQPPQLAEDSGENKAMLE.

Asp437 (nucleophile) is an active-site residue. Glu488 (proton donor) is an active-site residue.

It belongs to the glycosyl hydrolase 13 family. GlgB subfamily. In terms of assembly, monomer.

It carries out the reaction Transfers a segment of a (1-&gt;4)-alpha-D-glucan chain to a primary hydroxy group in a similar glucan chain.. It participates in glycan biosynthesis; glycogen biosynthesis. Catalyzes the formation of the alpha-1,6-glucosidic linkages in glycogen by scission of a 1,4-alpha-linked oligosaccharide from growing alpha-1,4-glucan chains and the subsequent attachment of the oligosaccharide to the alpha-1,6 position. This Synechococcus sp. (strain JA-3-3Ab) (Cyanobacteria bacterium Yellowstone A-Prime) protein is 1,4-alpha-glucan branching enzyme GlgB.